A 218-amino-acid chain; its full sequence is GTP cyclohydrolase 1 (218 aa).

The Zn(2+) site is built by cysteine 109, histidine 112, and cysteine 180.

This sequence belongs to the GTP cyclohydrolase I family. In terms of assembly, toroid-shaped homodecamer, composed of two pentamers of five dimers.

The catalysed reaction is GTP + H2O = 7,8-dihydroneopterin 3'-triphosphate + formate + H(+). The protein operates within cofactor biosynthesis; 7,8-dihydroneopterin triphosphate biosynthesis; 7,8-dihydroneopterin triphosphate from GTP: step 1/1. The polypeptide is GTP cyclohydrolase 1 (Histophilus somni (strain 129Pt) (Haemophilus somnus)).